The primary structure comprises 343 residues: tRNA N6-adenosine threonylcarbamoyltransferase (343 aa).

2 residues coordinate Fe cation: H111 and H115. Substrate-binding positions include 134 to 138 (LVSGG), D167, G180, and N276. Residue D304 participates in Fe cation binding.

This sequence belongs to the KAE1 / TsaD family. Requires Fe(2+) as cofactor.

Its subcellular location is the cytoplasm. The catalysed reaction is L-threonylcarbamoyladenylate + adenosine(37) in tRNA = N(6)-L-threonylcarbamoyladenosine(37) in tRNA + AMP + H(+). Functionally, required for the formation of a threonylcarbamoyl group on adenosine at position 37 (t(6)A37) in tRNAs that read codons beginning with adenine. Is involved in the transfer of the threonylcarbamoyl moiety of threonylcarbamoyl-AMP (TC-AMP) to the N6 group of A37, together with TsaE and TsaB. TsaD likely plays a direct catalytic role in this reaction. In Hahella chejuensis (strain KCTC 2396), this protein is tRNA N6-adenosine threonylcarbamoyltransferase.